The sequence spans 3901 residues: Nonribosomal peptide synthetase opaA (3901 aa).

The tract at residues 248-641 (HNAQHHPSVV…HRKDNQIKIR (394 aa)) is adenylation 1. The Carrier 1 domain occupies 780–854 (LPVTANEIVV…DMATRLTRIK (75 aa)). Serine 815 carries the post-translational modification O-(pantetheine 4'-phosphoryl)serine. A condensation 1 region spans residues 891 to 1164 (DAYPCSALQE…IATVPIRINL (274 aa)). Residues 1328–1725 (QSHAQKTPKS…GRIGNQVKLR (398 aa)) form an adenylation 2 region. The region spanning 1858–1936 (RTPLDTERDL…QIAAQAATRA (79 aa)) is the Carrier 2 domain. Serine 1895 bears the O-(pantetheine 4'-phosphoryl)serine mark. Residues 1953-2261 (KLTPIQQLFF…KDARRRLTRN (309 aa)) are epimerase. The tract at residues 2403 to 2826 (ENLYPCAPIQ…LVSTDHKRLL (424 aa)) is condensation 2. The adenylation 3 stretch occupies residues 2846 to 3243 (QQHVRETPDA…GRKDSQIKIR (398 aa)). In terms of domain architecture, Carrier 3 spans 3375 to 3451 (LPSTAGEQLL…ALAARSRSKD (77 aa)). Serine 3412 is modified (O-(pantetheine 4'-phosphoryl)serine). Positions 3509–3837 (HHFSFAVEGK…EDLKTHFTLN (329 aa)) are condensation 3.

It belongs to the NRP synthetase family.

Its function is as follows. Nonribosomal peptide synthetase; part of the gene cluster that mediates the biosynthesis of oxepinamides, derivatives of anthranilyl-containing tripeptides that share an oxepin ring and a fused pyrimidinone moiety. The nonribosomal peptide synthetase (NRPS) opaA assembles the quinazolinone core with D-Phe incorporation. The first adenylation domain (A1) of opaA loads and activates anthranilic acid whereas the second A domain (A2) is for activating of L-Phe, which is then converted to D-form by the E domain. The third A domain (A3) is responsible for L-Ile activation and the terminal condensation domain C3 for cyclization and releasing the NRPS product protuboxepin K. The cytochrome P450 monooxygenase opaB then catalyzes alone the oxepin ring formation to convert protuboxepin K into protuboxepin A. The flavoenzyme opaC installs subsequently one hydroxyl group at the oxepin ring, accompanied by double bond migration, to form 15-epi-oxepinamide E. The epimerase opaE changes the D-Phe residue back to L-form, leading to oxepinamide E, which is further methylated at the hydroxyl group at C-12 by the O-methyltransferase OpaF to yield oxepinamide F. This chain is Nonribosomal peptide synthetase opaA, found in Aspergillus ustus.